A 318-amino-acid chain; its full sequence is Small ribosomal subunit biogenesis GTPase RsgA (318 aa).

Residues M1–A16 show a composition bias toward basic residues. The interval M1–H21 is disordered. Residues S84–F249 enclose the CP-type G domain. Residues N133–D136 and G187–S195 each bind GTP. C273, C278, H280, and C286 together coordinate Zn(2+).

This sequence belongs to the TRAFAC class YlqF/YawG GTPase family. RsgA subfamily. In terms of assembly, monomer. Associates with 30S ribosomal subunit, binds 16S rRNA. The cofactor is Zn(2+).

It localises to the cytoplasm. In terms of biological role, one of several proteins that assist in the late maturation steps of the functional core of the 30S ribosomal subunit. Helps release RbfA from mature subunits. May play a role in the assembly of ribosomal proteins into the subunit. Circularly permuted GTPase that catalyzes slow GTP hydrolysis, GTPase activity is stimulated by the 30S ribosomal subunit. In Ralstonia nicotianae (strain ATCC BAA-1114 / GMI1000) (Ralstonia solanacearum), this protein is Small ribosomal subunit biogenesis GTPase RsgA.